The chain runs to 390 residues: 5-hydroxytryptamine receptor 1B (390 aa).

The disordered stretch occupies residues 1–21; it reads MEETGAQCAPPPPAGSQTGVS. The Extracellular portion of the chain corresponds to 1 to 46; the sequence is MEETGAQCAPPPPAGSQTGVSQVNLSAAPSHNCSTEGYVYQDSVAL. N-linked (GlcNAc...) asparagine glycans are attached at residues Asn-24 and Asn-32. A helical membrane pass occupies residues 47–72; that stretch reads PWKVLLVVLLALITLATTLSNAFVIA. Over 73-86 the chain is Cytoplasmic; it reads TVYRTRKLHTPANY. A helical membrane pass occupies residues 87–111; it reads LIASLAVTDLLVSILVMPISTMYVV. At 112-119 the chain is on the extracellular side; it reads TGRWTLGQ. A helical transmembrane segment spans residues 120 to 145; the sequence is VVCDFWLSSDITCCTASILHLCVIAL. A disulfide bridge connects residues Cys-122 and Cys-199. Ergotamine-binding residues include Asp-129 and Thr-134. The DRY motif; important for ligand-induced conformation changes and signaling motif lies at 146–148; the sequence is DRY. Over 146–165 the chain is Cytoplasmic; the sequence is DRYWAITDAVEYSAKRTPKR. Residues 166-184 form a helical membrane-spanning segment; sequence AAVMIALVWVFSISISLPP. Over 185 to 205 the chain is Extracellular; it reads FFWRQAKAEEEVLDCLVNTDH. An ergotamine-binding site is contributed by Val-201. Residues 206 to 229 form a helical membrane-spanning segment; that stretch reads ILYTVYSTVGAFYFPTLLLIALYS. Residues 230-315 lie on the Cytoplasmic side of the membrane; it reads RIYVEARSRI…AARERKATKT (86 aa). Residues 251-282 form a disordered region; it reads LTRAQLMTDSPGSTSSVTSINSRAPDVPSESG. Over residues 255–272 the composition is skewed to polar residues; sequence QLMTDSPGSTSSVTSINS. A helical transmembrane segment spans residues 316 to 337; sequence LGIILGAFIVCWLPFFIISLVM. The Extracellular portion of the chain corresponds to 338-347; the sequence is PICKDACWFH. Residues 348 to 370 traverse the membrane as a helical segment; it reads LAIFDFFTWLGYLNSLINPIIYT. Residues 365–369 carry the NPxxY motif; important for ligand-induced conformation changes and signaling motif; sequence NPIIY. The Cytoplasmic portion of the chain corresponds to 371–390; sequence MSNEDFKQAFHKLIRFKCAS. The S-palmitoyl cysteine moiety is linked to residue Cys-388.

It belongs to the G-protein coupled receptor 1 family. Homodimer. Heterodimer with HTR1D. In terms of processing, phosphorylated. Desensitization of the receptor may be mediated by its phosphorylation. Post-translationally, palmitoylated.

The protein resides in the cell membrane. Functionally, G-protein coupled receptor for 5-hydroxytryptamine (serotonin). Also functions as a receptor for ergot alkaloid derivatives, various anxiolytic and antidepressant drugs and other psychoactive substances, such as lysergic acid diethylamide (LSD). Ligand binding causes a conformation change that triggers signaling via guanine nucleotide-binding proteins (G proteins) and modulates the activity of downstream effectors, such as adenylate cyclase. HTR1B is coupled to G(i)/G(o) G alpha proteins and mediates inhibitory neurotransmission by inhibiting adenylate cyclase activity. Arrestin family members inhibit signaling via G proteins and mediate activation of alternative signaling pathways. Regulates the release of 5-hydroxytryptamine, dopamine and acetylcholine in the brain, and thereby affects neural activity, nociceptive processing, pain perception, mood and behavior. Besides, plays a role in vasoconstriction of cerebral arteries. The chain is 5-hydroxytryptamine receptor 1B (HTR1B) from Equus caballus (Horse).